Here is a 663-residue protein sequence, read N- to C-terminus: DNA topoisomerase 4 subunit B (663 aa).

ATP contacts are provided by residues Tyr-21, Asn-61, Asp-88, 130-136 (GLHGVGI), and Lys-360. One can recognise a Toprim domain in the interval 440–554 (TELFIVEGDS…EGHLYLAKPP (115 aa)). Positions 446, 519, and 521 each coordinate Mg(2+).

Belongs to the type II topoisomerase family. ParE type 1 subfamily. As to quaternary structure, heterotetramer composed of ParC and ParE. Mg(2+) serves as cofactor. Mn(2+) is required as a cofactor. Requires Ca(2+) as cofactor.

It catalyses the reaction ATP-dependent breakage, passage and rejoining of double-stranded DNA.. Its function is as follows. Topoisomerase IV is essential for chromosome segregation. It relaxes supercoiled DNA. Performs the decatenation events required during the replication of a circular DNA molecule. The chain is DNA topoisomerase 4 subunit B from Rickettsia typhi (strain ATCC VR-144 / Wilmington).